The chain runs to 316 residues: 4-hydroxy-3-methylbut-2-enyl diphosphate reductase (316 aa).

Cys-12 serves as a coordination point for [4Fe-4S] cluster. Residues His-41 and His-74 each coordinate (2E)-4-hydroxy-3-methylbut-2-enyl diphosphate. The dimethylallyl diphosphate site is built by His-41 and His-74. Residues His-41 and His-74 each coordinate isopentenyl diphosphate. Cys-96 is a binding site for [4Fe-4S] cluster. Residue His-124 coordinates (2E)-4-hydroxy-3-methylbut-2-enyl diphosphate. His-124 is a binding site for dimethylallyl diphosphate. An isopentenyl diphosphate-binding site is contributed by His-124. Glu-126 serves as the catalytic Proton donor. A (2E)-4-hydroxy-3-methylbut-2-enyl diphosphate-binding site is contributed by Thr-167. Cys-197 serves as a coordination point for [4Fe-4S] cluster. Ser-225, Ser-226, Asn-227, and Ser-269 together coordinate (2E)-4-hydroxy-3-methylbut-2-enyl diphosphate. Ser-225, Ser-226, Asn-227, and Ser-269 together coordinate dimethylallyl diphosphate. Positions 225, 226, 227, and 269 each coordinate isopentenyl diphosphate.

It belongs to the IspH family. In terms of assembly, homodimer. The cofactor is [4Fe-4S] cluster.

It carries out the reaction isopentenyl diphosphate + 2 oxidized [2Fe-2S]-[ferredoxin] + H2O = (2E)-4-hydroxy-3-methylbut-2-enyl diphosphate + 2 reduced [2Fe-2S]-[ferredoxin] + 2 H(+). The enzyme catalyses dimethylallyl diphosphate + 2 oxidized [2Fe-2S]-[ferredoxin] + H2O = (2E)-4-hydroxy-3-methylbut-2-enyl diphosphate + 2 reduced [2Fe-2S]-[ferredoxin] + 2 H(+). It participates in isoprenoid biosynthesis; dimethylallyl diphosphate biosynthesis; dimethylallyl diphosphate from (2E)-4-hydroxy-3-methylbutenyl diphosphate: step 1/1. It functions in the pathway isoprenoid biosynthesis; isopentenyl diphosphate biosynthesis via DXP pathway; isopentenyl diphosphate from 1-deoxy-D-xylulose 5-phosphate: step 6/6. Functionally, catalyzes the conversion of 1-hydroxy-2-methyl-2-(E)-butenyl 4-diphosphate (HMBPP) into a mixture of isopentenyl diphosphate (IPP) and dimethylallyl diphosphate (DMAPP). Acts in the terminal step of the DOXP/MEP pathway for isoprenoid precursor biosynthesis. This Salmonella schwarzengrund (strain CVM19633) protein is 4-hydroxy-3-methylbut-2-enyl diphosphate reductase.